A 201-amino-acid chain; its full sequence is Acyl-homoserine-lactone synthase (201 aa).

Belongs to the autoinducer synthase family.

The catalysed reaction is a fatty acyl-[ACP] + S-adenosyl-L-methionine = an N-acyl-L-homoserine lactone + S-methyl-5'-thioadenosine + holo-[ACP] + H(+). Its function is as follows. Required for the synthesis of PAI consisting of 3-oxo-N-(tetrahydro-2-oxo-3-furanyl)-dodecanamide also known as N-(3-oxododecanoyl)homoserine lactone, an autoinducer molecule which binds to LasR and thus acts in elastase biosynthesis regulation. The protein is Acyl-homoserine-lactone synthase (lasI) of Pseudomonas aeruginosa (strain ATCC 15692 / DSM 22644 / CIP 104116 / JCM 14847 / LMG 12228 / 1C / PRS 101 / PAO1).